Here is a 391-residue protein sequence, read N- to C-terminus: Transaldolase (391 aa).

Residues 1-329 form a transaldolase region; that stretch reads MGKNLLEQLR…RLKVLDGQEH (329 aa). Lys-136 (schiff-base intermediate with substrate) is an active-site residue. EF-hand domains are found at residues 329-364 and 365-387; these read HIKH…FDAL and DRDH…AFRL. Ca(2+) is bound by residues Asp-342, Asp-344, Asp-346, Glu-353, Asp-365, Asp-367, Asp-369, Lys-371, and Glu-376.

This sequence belongs to the transaldolase family. Type 1 subfamily.

The protein localises to the cytoplasm. The enzyme catalyses D-sedoheptulose 7-phosphate + D-glyceraldehyde 3-phosphate = D-erythrose 4-phosphate + beta-D-fructose 6-phosphate. It participates in carbohydrate degradation; pentose phosphate pathway; D-glyceraldehyde 3-phosphate and beta-D-fructose 6-phosphate from D-ribose 5-phosphate and D-xylulose 5-phosphate (non-oxidative stage): step 2/3. Transaldolase is important for the balance of metabolites in the pentose-phosphate pathway. In Synechocystis sp. (strain ATCC 27184 / PCC 6803 / Kazusa), this protein is Transaldolase.